A 252-amino-acid chain; its full sequence is 2-succinyl-6-hydroxy-2,4-cyclohexadiene-1-carboxylate synthase (252 aa).

It belongs to the AB hydrolase superfamily. MenH family. In terms of assembly, monomer.

The enzyme catalyses 5-enolpyruvoyl-6-hydroxy-2-succinyl-cyclohex-3-ene-1-carboxylate = (1R,6R)-6-hydroxy-2-succinyl-cyclohexa-2,4-diene-1-carboxylate + pyruvate. It functions in the pathway quinol/quinone metabolism; 1,4-dihydroxy-2-naphthoate biosynthesis; 1,4-dihydroxy-2-naphthoate from chorismate: step 3/7. It participates in quinol/quinone metabolism; menaquinone biosynthesis. Catalyzes a proton abstraction reaction that results in 2,5-elimination of pyruvate from 2-succinyl-5-enolpyruvyl-6-hydroxy-3-cyclohexene-1-carboxylate (SEPHCHC) and the formation of 2-succinyl-6-hydroxy-2,4-cyclohexadiene-1-carboxylate (SHCHC). The protein is 2-succinyl-6-hydroxy-2,4-cyclohexadiene-1-carboxylate synthase of Salmonella schwarzengrund (strain CVM19633).